Consider the following 546-residue polypeptide: Probable bifunctional SAT/APS kinase (546 aa).

The tract at residues Met1–Lys370 is sulfate adenylyltransferase. Residues Gln371–Asp546 form an adenylsulfate kinase region. ATP is bound at residue Gly379–Ser386. Catalysis depends on Ser453, which acts as the Phosphoserine intermediate.

The protein in the N-terminal section; belongs to the sulfate adenylyltransferase family. It in the C-terminal section; belongs to the APS kinase family.

The catalysed reaction is sulfate + ATP + H(+) = adenosine 5'-phosphosulfate + diphosphate. It catalyses the reaction adenosine 5'-phosphosulfate + ATP = 3'-phosphoadenylyl sulfate + ADP + H(+). Its pathway is sulfur metabolism; hydrogen sulfide biosynthesis; sulfite from sulfate: step 1/3. It participates in sulfur metabolism; hydrogen sulfide biosynthesis; sulfite from sulfate: step 2/3. In Aquifex aeolicus (strain VF5), this protein is Probable bifunctional SAT/APS kinase (sat/cysC).